A 236-amino-acid polypeptide reads, in one-letter code: Urease accessory protein UreF (236 aa).

It belongs to the UreF family. As to quaternary structure, ureD, UreF and UreG form a complex that acts as a GTP-hydrolysis-dependent molecular chaperone, activating the urease apoprotein by helping to assemble the nickel containing metallocenter of UreC. The UreE protein probably delivers the nickel.

It localises to the cytoplasm. Required for maturation of urease via the functional incorporation of the urease nickel metallocenter. In Granulibacter bethesdensis (strain ATCC BAA-1260 / CGDNIH1), this protein is Urease accessory protein UreF.